Consider the following 523-residue polypeptide: 2-isopropylmalate synthase (523 aa).

Positions 5 to 267 (VIIFDTTLRD…HTNINHHEIW (263 aa)) constitute a Pyruvate carboxyltransferase domain. 4 residues coordinate Mn(2+): Asp14, His202, His204, and Asn238. The tract at residues 392-523 (RLDYFSVQSG…QNKENNKETV (132 aa)) is regulatory domain.

This sequence belongs to the alpha-IPM synthase/homocitrate synthase family. LeuA type 1 subfamily. Homodimer. Mn(2+) serves as cofactor.

The protein resides in the cytoplasm. It catalyses the reaction 3-methyl-2-oxobutanoate + acetyl-CoA + H2O = (2S)-2-isopropylmalate + CoA + H(+). The protein operates within amino-acid biosynthesis; L-leucine biosynthesis; L-leucine from 3-methyl-2-oxobutanoate: step 1/4. Its function is as follows. Catalyzes the condensation of the acetyl group of acetyl-CoA with 3-methyl-2-oxobutanoate (2-ketoisovalerate) to form 3-carboxy-3-hydroxy-4-methylpentanoate (2-isopropylmalate). This Salmonella newport (strain SL254) protein is 2-isopropylmalate synthase.